Here is a 2147-residue protein sequence, read N- to C-terminus: Non-reducing polyketide synthase albA (2147 aa).

The tract at residues 8–244 is N-terminal acylcarrier protein transacylase domain (SAT); sequence YLFGDQTSDI…VKAPIHGPYH (237 aa). Residues 375 to 806 form the Ketosynthase family 3 (KS3) domain; sequence CSKIAIIGMS…GGNTAILLED (432 aa). Catalysis depends on for beta-ketoacyl synthase activity residues Cys-547, His-682, and His-724. The segment at 912 to 1232 is malonyl-CoA:ACP transacylase (MAT) domain; sequence FVFTGQGAQY…LSSLHLAGID (321 aa). Ser-1001 (for acyl/malonyl transferase activity) is an active-site residue. The segment at 1286–1425 is N-terminal hotdog fold; it reads HEFLTTAAQK…CTVRFFDCAA (140 aa). Residues 1286–1598 enclose the PKS/mFAS DH domain; that stretch reads HEFLTTAAQK…FQGLSRKILD (313 aa). Residues 1290 to 1603 are product template (PT) domain; that stretch reads TTAAQKVIET…RKILDTVLPP (314 aa). Residue His-1326 is the Proton acceptor; for dehydratase activity of the active site. The interval 1452–1598 is C-terminal hotdog fold; that stretch reads DAHRLGRGMV…FQGLSRKILD (147 aa). Asp-1511 serves as the catalytic Proton donor; for dehydratase activity. The tract at residues 1608–1637 is disordered; it reads KGPARPAASAQKAAPAATSKSRASAPAPAK. Positions 1610–1637 are enriched in low complexity; it reads PARPAASAQKAAPAATSKSRASAPAPAK. The 78-residue stretch at 1642–1719 folds into the Carrier 1 domain; that stretch reads PSAPSLVKRA…DFKQFLAPMS (78 aa). Ser-1679 is subject to O-(pantetheine 4'-phosphoryl)serine. Positions 1719–1759 are disordered; the sequence is SQGEASDGSTSDPESSSSFNGGSSTDESSAGSPVSSPPNEK. Over residues 1724-1747 the composition is skewed to low complexity; it reads SDGSTSDPESSSSFNGGSSTDESS. The 78-residue stretch at 1760–1837 folds into the Carrier 2 domain; that stretch reads IEQHATMKEI…DVEDALGLKP (78 aa). Ser-1797 is modified (O-(pantetheine 4'-phosphoryl)serine). A claisen cyclase domain region spans residues 1873 to 2145; it reads SPHPRSTSIL…ELGSFIGNAM (273 aa). The active-site For Claisen cyclase activity is Ser-1963.

It carries out the reaction 6 malonyl-CoA + acetyl-CoA + 6 H(+) = naphtopyrone YWA1 + 6 CO2 + 7 CoA + H2O. The protein operates within secondary metabolite biosynthesis. Non-reducing polyketide synthase involved in the biosynthesis of bifonsecin B, a dimeric gamma-naphthopyrone. The first step in the biosynthesis of bifonsecin B is the production of gamma-naphthopyrone precursor YWA1 by the non-reducing polyketide synthase albA, via condensation of one acetyl-CoA starter unit with 6 malonyl-CoA units. YWA1 is then methylated by bfoE at position C-6 to yield foncesin which is further methylated at position C-8 by bfoD to produce fonsecin B. A key enzyme in the biosynthetic pathway is the cytochrome P450 monooxygenase bfoB which catalyzes the oxidative dimerization of fonsecin B to bifonsecin B. Bfob also catalyzes the oxidative dimerization of rubrofusarin B into nigerone. The stereoselectivity of bfoB is influenced by the two natural monomeric substrates; homodimerization of fonsecin B yields a stereochemically pure biaryl, M-foncerine B, while rubrofusarin B yields a mixture of enantiomers M- and P-nigerone. The polypeptide is Non-reducing polyketide synthase albA (Aspergillus brasiliensis (strain CBS 101740 / IMI 381727 / IBT 21946)).